The sequence spans 351 residues: MNPPKSAPDAQGLSYRDAGVDIDAGDALIDKIKPFAKKTLRDGVLGGIGGFGALFEVPKKYREPVLVSGTDGVGTKLKLAFHLNKHDTVGQDLVAMSVNDILVQGAEPLFFLDYFACGKLDVDTAATVVKGIAHGCELSGCALIGGETAEMPGMYPDGEYDLAGFAVGAVEKSKIIDGSTIGAGDVVLGLASSGIHSNGFSLVRKIIERANPDLSADFHGRSLADTLMAPTRIYVKPLLALMQKLTVKGMAHITGGGLVENIPRVLREGLTAELDQNAWPLPPLFKWLQEHGGVADAEMHRVFNCGIGMAVIVAAADADAAIADLTAAGEQVWKIGTVRASREGEAQTVVV.

This sequence belongs to the AIR synthase family.

The protein resides in the cytoplasm. The enzyme catalyses 2-formamido-N(1)-(5-O-phospho-beta-D-ribosyl)acetamidine + ATP = 5-amino-1-(5-phospho-beta-D-ribosyl)imidazole + ADP + phosphate + H(+). It functions in the pathway purine metabolism; IMP biosynthesis via de novo pathway; 5-amino-1-(5-phospho-D-ribosyl)imidazole from N(2)-formyl-N(1)-(5-phospho-D-ribosyl)glycinamide: step 2/2. This chain is Phosphoribosylformylglycinamidine cyclo-ligase, found in Burkholderia vietnamiensis (strain G4 / LMG 22486) (Burkholderia cepacia (strain R1808)).